The chain runs to 470 residues: Cysteine--tRNA ligase (470 aa).

Zn(2+) is bound at residue C46. Positions 48 to 58 match the 'HIGH' region motif; that stretch reads PTVYDLAHIGN. C230, H255, and E259 together coordinate Zn(2+). The 'KMSKS' region signature appears at 288-292; sequence KMSKS. K291 contributes to the ATP binding site.

This sequence belongs to the class-I aminoacyl-tRNA synthetase family. Monomer. Zn(2+) is required as a cofactor.

It localises to the cytoplasm. It carries out the reaction tRNA(Cys) + L-cysteine + ATP = L-cysteinyl-tRNA(Cys) + AMP + diphosphate. This chain is Cysteine--tRNA ligase, found in Granulibacter bethesdensis (strain ATCC BAA-1260 / CGDNIH1).